A 345-amino-acid chain; its full sequence is MLPCFQLLRIGGGRGGDLYTFHPPAGAGCTYRLGHRADLCDVALRPQQEPGLISGIHAELHAEPRGDDWRVSLEDHSSQGTLVNNVRLPRGHRLELSDGDLLTFGPEGPPGTSPSEFYFMFQQVRVKPQDFAAITIPRSRGEARVGAGFRPMLPSQGAPQRPLSTLSPAPKATLILNSIGSLSKLRPQPLTFSPSWGGPKSLPVPAPPGEVGTTPSAPPQRNRRKSVHRVLAELDDESEPPENPPPVLMERRKKLRVDKAPLTPTGNRRGRPRKYPVSAPVAPPAVGGGEPCAAPCCCLPQEETVAWVQCDGCDVWFHVACVGCSIQAAREADFRCPGCRAGIQT.

Positions 31-88 (YRLGHRADLCDVALRPQQEPGLISGIHAELHAEPRGDDWRVSLEDHSSQGTLVNNVRL) constitute an FHA domain. Serine 78 carries the post-translational modification Phosphoserine. Disordered stretches follow at residues 147 to 167 (AGFR…STLS) and 190 to 227 (LTFS…RKSV). A PHD-type zinc finger spans residues 293–342 (AAPCCCLPQEETVAWVQCDGCDVWFHVACVGCSIQAAREADFRCPGCRAG). Residues cysteine 296, cysteine 298, cysteine 310, cysteine 313, histidine 318, cysteine 321, cysteine 336, and cysteine 339 each contribute to the Zn(2+) site.

The protein localises to the nucleus. In terms of biological role, potential transcription factor that may play a role in the regulation of genes involved in cell cycle G1/S transition. May bind to regulatory elements of genes, including the promoter of the transcription factor FOXO1. This chain is Transcription factor 19 (TCF19), found in Pan troglodytes (Chimpanzee).